Consider the following 528-residue polypeptide: Phosphoenolpyruvate carboxykinase (ATP) (528 aa).

Substrate is bound by residues Arg56, Tyr192, and Lys198. ATP contacts are provided by residues Lys198, His217, and 233 to 241 (GLSGTGKTT). Positions 198 and 217 each coordinate Mn(2+). Asp254 is a binding site for Mn(2+). Residues Glu282, Arg319, and Thr444 each contribute to the ATP site. Arg319 is a substrate binding site.

This sequence belongs to the phosphoenolpyruvate carboxykinase (ATP) family. Requires Mn(2+) as cofactor.

The protein localises to the cytoplasm. It catalyses the reaction oxaloacetate + ATP = phosphoenolpyruvate + ADP + CO2. Its pathway is carbohydrate biosynthesis; gluconeogenesis. Its function is as follows. Involved in the gluconeogenesis. Catalyzes the conversion of oxaloacetate (OAA) to phosphoenolpyruvate (PEP) through direct phosphoryl transfer between the nucleoside triphosphate and OAA. This Bacillus cereus (strain ATCC 10987 / NRS 248) protein is Phosphoenolpyruvate carboxykinase (ATP).